A 160-amino-acid chain; its full sequence is AP-1 complex subunit sigma-2 (160 aa).

This sequence belongs to the adaptor complexes small subunit family. Adaptor protein complex 1 (AP-1) is a heterotetramer composed of two large adaptins (gamma-type subunit AP1G1 and beta-type subunit AP1B1), a medium adaptin (mu-type subunit AP1M1 or AP1M2) and a small adaptin (sigma-type subunit AP1S1 or AP1S2 or AP1S3). Binds to MUC1. Widely expressed.

The protein resides in the golgi apparatus. It localises to the cytoplasmic vesicle membrane. The protein localises to the membrane. It is found in the clathrin-coated pit. Its function is as follows. Subunit of clathrin-associated adaptor protein complex 1 that plays a role in protein sorting in the late-Golgi/trans-Golgi network (TGN) and/or endosomes. The AP complexes mediate both the recruitment of clathrin to membranes and the recognition of sorting signals within the cytosolic tails of transmembrane cargo molecules. The polypeptide is AP-1 complex subunit sigma-2 (Ap1s2) (Mus musculus (Mouse)).